We begin with the raw amino-acid sequence, 934 residues long: Protein translocase subunit SecA (934 aa).

ATP contacts are provided by residues Gln90, 108–112 (GEGKT), and Asp509. A disordered region spans residues 535 to 565 (PEEDHTPPVPLQRSAPGGFSDAAAPSLPRSG).

The protein belongs to the SecA family. In terms of assembly, monomer and homodimer. Part of the essential Sec protein translocation apparatus which comprises SecA, SecYEG and auxiliary proteins SecDF. Other proteins may also be involved.

The protein resides in the cell inner membrane. Its subcellular location is the cellular thylakoid membrane. The protein localises to the cytoplasm. It catalyses the reaction ATP + H2O + cellular proteinSide 1 = ADP + phosphate + cellular proteinSide 2.. Its function is as follows. Part of the Sec protein translocase complex. Interacts with the SecYEG preprotein conducting channel. Has a central role in coupling the hydrolysis of ATP to the transfer of proteins into and across the cell membrane, serving as an ATP-driven molecular motor driving the stepwise translocation of polypeptide chains across the membrane. Probably participates in protein translocation into and across both the cytoplasmic and thylakoid membranes in cyanobacterial cells. This is Protein translocase subunit SecA from Synechococcus sp. (strain CC9605).